The chain runs to 238 residues: Uridylate kinase (238 aa).

An ATP-binding site is contributed by 12–15; it reads KLSG. Residue glycine 54 coordinates UMP. ATP contacts are provided by glycine 55 and arginine 59. UMP is bound by residues aspartate 74 and 135 to 142; that span reads TGNPFFTT. ATP is bound by residues threonine 162, tyrosine 168, and aspartate 171.

This sequence belongs to the UMP kinase family. As to quaternary structure, homohexamer.

The protein localises to the cytoplasm. The catalysed reaction is UMP + ATP = UDP + ADP. Its pathway is pyrimidine metabolism; CTP biosynthesis via de novo pathway; UDP from UMP (UMPK route): step 1/1. With respect to regulation, inhibited by UTP. Functionally, catalyzes the reversible phosphorylation of UMP to UDP. The protein is Uridylate kinase of Janthinobacterium sp. (strain Marseille) (Minibacterium massiliensis).